The following is a 364-amino-acid chain: DNA polymerase IV (364 aa).

The UmuC domain occupies 14–198 (IIHIDMDAFF…LPIEKFHGVG (185 aa)). Positions 18 and 116 each coordinate Mg(2+). Glu-117 is a catalytic residue.

This sequence belongs to the DNA polymerase type-Y family. Monomer. Mg(2+) serves as cofactor.

It is found in the cytoplasm. It carries out the reaction DNA(n) + a 2'-deoxyribonucleoside 5'-triphosphate = DNA(n+1) + diphosphate. Poorly processive, error-prone DNA polymerase involved in untargeted mutagenesis. Copies undamaged DNA at stalled replication forks, which arise in vivo from mismatched or misaligned primer ends. These misaligned primers can be extended by PolIV. Exhibits no 3'-5' exonuclease (proofreading) activity. May be involved in translesional synthesis, in conjunction with the beta clamp from PolIII. This is DNA polymerase IV from Streptococcus pyogenes serotype M5 (strain Manfredo).